A 231-amino-acid polypeptide reads, in one-letter code: NADH-ubiquinone oxidoreductase chain 4 (231 aa).

Transmembrane regions (helical) follow at residues proline 1–isoleucine 21, valine 34–leucine 54, isoleucine 63–glycine 85, alanine 89–tyrosine 111, methionine 128–proline 148, threonine 169–leucine 189, and leucine 211–threonine 231.

The protein belongs to the complex I subunit 4 family.

It localises to the mitochondrion membrane. The catalysed reaction is a ubiquinone + NADH + 5 H(+)(in) = a ubiquinol + NAD(+) + 4 H(+)(out). In terms of biological role, core subunit of the mitochondrial membrane respiratory chain NADH dehydrogenase (Complex I) that is believed to belong to the minimal assembly required for catalysis. Complex I functions in the transfer of electrons from NADH to the respiratory chain. The immediate electron acceptor for the enzyme is believed to be ubiquinone. This Sistrurus miliarius (Pigmy rattlesnake) protein is NADH-ubiquinone oxidoreductase chain 4 (MT-ND4).